Reading from the N-terminus, the 307-residue chain is Retron Ec86 putative ribosyltransferase/DNA-binding protein (307 aa).

In terms of biological role, possible ribosyltransferase/DNA-binding component of antiviral defense system retron Ec86, composed of a non-coding RNA (ncRNA), a ribosyltransferase/DNA-binding protein and a reverse transcriptase (RT). Expression of the 3-gene retron confers protection against bacteriophages T5. At multiplicity of infection (MOI) of 0.02 cultures grow normally when infected with T5 without collapsing, at MOI 2 cultures enter growth stasis. This is Retron Ec86 putative ribosyltransferase/DNA-binding protein from Escherichia coli.